We begin with the raw amino-acid sequence, 738 residues long: Ethylene receptor (738 aa).

Transmembrane regions (helical) follow at residues 22-42, 53-73, and 91-111; these read ISDFFIAVAYFSIPIELVYFV, VLVQFGAFIVLCGATHLINLW, and VLTAVVSCATALMLVHIIPDL. The Cu cation site is built by cysteine 64 and histidine 68. A GAF domain is found at 157–305; that stretch reads DRHTILKTTL…VVADQVAVAL (149 aa). Residues 348 to 585 enclose the Histidine kinase domain; that stretch reads VMNHEMRTPM…TAIFIVKLGI (238 aa). The residue at position 351 (histidine 351) is a Phosphohistidine; by autocatalysis. The 118-residue stretch at 613-730 folds into the Response regulatory domain; the sequence is KVLIMDDNGF…KMRSVLSELL (118 aa). Aspartate 661 is subject to 4-aspartylphosphate.

This sequence belongs to the ethylene receptor family. In terms of assembly, homodimer; disulfide-linked. Cu cation is required as a cofactor. Post-translationally, activation probably requires a transfer of a phosphate group between a His in the transmitter domain and an Asp of the receiver domain.

The protein resides in the endoplasmic reticulum membrane. It carries out the reaction ATP + protein L-histidine = ADP + protein N-phospho-L-histidine.. In terms of biological role, may act early in the ethylene signal transduction pathway, possibly as an ethylene receptor, or as a regulator of the pathway. This chain is Ethylene receptor (ETR1), found in Nicotiana tabacum (Common tobacco).